Consider the following 59-residue polypeptide: Movement protein TGBp3 (59 aa).

The Lumenal portion of the chain corresponds to 1–3 (MHL). A helical membrane pass occupies residues 4–21 (AIVGALTLVLTLFVLHYT). Topologically, residues 22–59 (TKDDRCYILINGHSAFTNCPASPDLAKVISQLKPHNHG) are cytoplasmic.

Belongs to the Tymovirales TGBp3 protein family.

The protein resides in the host endoplasmic reticulum membrane. Its function is as follows. Plays a role in viral cell-to-cell propagation, by facilitating genome transport to neighboring plant cells through plasmosdesmata. May induce the formation of granular vesicles derived from the Endoplasmic reticulum, which align on actin filaments. The protein is Movement protein TGBp3 of Chenopodium album (Fat hen).